The primary structure comprises 68 residues: MAFLKKSLFLVLFLGLVSLSICEEKERETKEEENEQEDDNREEKRFLSLIPHVISAIPHVVNALSNLG.

The first 22 residues, 1–22 (MAFLKKSLFLVLFLGLVSLSIC), serve as a signal peptide directing secretion. A propeptide spanning residues 23–45 (EEKERETKEEENEQEDDNREEKR) is cleaved from the precursor. A Leucine amide modification is found at L67.

Expressed by the skin glands.

The protein localises to the secreted. In terms of biological role, weak cationic amphipathic alpha-helical antimicrobial peptide with weak activity against Gram-positive and Gram-negative bacteria and fungi. Has been tested against E.coli (MIC&gt;217.69 uM), S.aureus (MIC&gt;217.69 uM), K.pneumoniae (MIC&gt;189.00 uM) and C.albicans (MIC&gt;217.69 uM). Shows a moderate hemolytic activity. This Agalychnis spurrelli (Gliding leaf frog) protein is Phylloseptin-SP1.